Reading from the N-terminus, the 25-residue chain is MRAKWRKKRMRRLKRKRRKMRARSK.

Positions 1-25 (MRAKWRKKRMRRLKRKRRKMRARSK) are disordered.

Belongs to the eukaryotic ribosomal protein eS32 family. In terms of assembly, component of the small ribosomal subunit.

In Spodoptera frugiperda (Fall armyworm), this protein is Small ribosomal subunit protein eS32 (RpL41).